Reading from the N-terminus, the 308-residue chain is Ribosomal RNA small subunit methyltransferase H (308 aa).

Residues 38–40 (GGH), Asp58, Phe82, Asp99, and Gln106 each bind S-adenosyl-L-methionine.

The protein belongs to the methyltransferase superfamily. RsmH family.

It is found in the cytoplasm. It catalyses the reaction cytidine(1402) in 16S rRNA + S-adenosyl-L-methionine = N(4)-methylcytidine(1402) in 16S rRNA + S-adenosyl-L-homocysteine + H(+). In terms of biological role, specifically methylates the N4 position of cytidine in position 1402 (C1402) of 16S rRNA. This is Ribosomal RNA small subunit methyltransferase H from Acidovorax sp. (strain JS42).